Consider the following 421-residue polypeptide: AP-3 complex subunit mu (421 aa).

In terms of domain architecture, MHD spans 178 to 420 (QNKIFFDIIE…TTKAGKFQVR (243 aa)).

Belongs to the adaptor complexes medium subunit family. As to quaternary structure, adaptor protein complex 3 (AP-3) is a heterotetramer composed of two large adaptins (delta-type subunit and beta-type subunit), a medium adaptin (mu-type subunit) and a small adaptin (sigma-type subunit).

The protein localises to the endosome membrane. Functionally, part of the AP-3 complex, an adaptor-related complex which is essential for the compartmentalization of the endocytic pathway. This Dictyostelium discoideum (Social amoeba) protein is AP-3 complex subunit mu (apm3).